Consider the following 501-residue polypeptide: Phosphatase and actin regulator 1 (501 aa).

An RPEL 1 repeat occupies 1–18 (MRQSREELIKRGVLKEIF). Disordered regions lie at residues 21 to 46 (DGELSIPNEEGALENGQPLGSGQVLS) and 295 to 329 (DNKENVPHEADYEDSSCLYPRQEEEEEEDEDEDNS). Positions 36 to 46 (GQPLGSGQVLS) are enriched in low complexity. Residues 295–304 (DNKENVPHEA) are compositionally biased toward basic and acidic residues. Residues 317–328 (EEEEEEDEDEDN) are compositionally biased toward acidic residues. RPEL repeat units lie at residues 343 to 368 (DSLAIKLSNRPSKRELEEKNILPMQT), 381 to 406 (TKLTRRLSQRPTAEELEQRNILKPRN), and 419 to 444 (RRLTRKLSQRPTVEELRERKILIRFS). The tract at residues 382-415 (KLTRRLSQRPTAEELEQRNILKPRNEQEEQEEKR) is disordered. Basic and acidic residues predominate over residues 392–415 (TAEELEQRNILKPRNEQEEQEEKR).

Belongs to the phosphatase and actin regulator family. As to quaternary structure, interacts (via RPEL repeats) with ACTA1. As to expression, expressed in the gizzard, and in neurons from central and peripheral nervous systems.

It localises to the cytoplasm. Its subcellular location is the synapse. The protein resides in the nucleus. Functionally, binds actin monomers (G actin) and plays a role in the reorganization of the actin cytoskeleton and in formation of actin stress fibers. This is Phosphatase and actin regulator 1 (PHACTR1) from Gallus gallus (Chicken).